The sequence spans 156 residues: ATP synthase subunit b (156 aa).

Residues 11 to 31 form a helical membrane-spanning segment; it reads AIAFAIFVMFCMKFVWPPLIG.

The protein belongs to the ATPase B chain family. As to quaternary structure, F-type ATPases have 2 components, F(1) - the catalytic core - and F(0) - the membrane proton channel. F(1) has five subunits: alpha(3), beta(3), gamma(1), delta(1), epsilon(1). F(0) has three main subunits: a(1), b(2) and c(10-14). The alpha and beta chains form an alternating ring which encloses part of the gamma chain. F(1) is attached to F(0) by a central stalk formed by the gamma and epsilon chains, while a peripheral stalk is formed by the delta and b chains.

It localises to the cell inner membrane. Functionally, f(1)F(0) ATP synthase produces ATP from ADP in the presence of a proton or sodium gradient. F-type ATPases consist of two structural domains, F(1) containing the extramembraneous catalytic core and F(0) containing the membrane proton channel, linked together by a central stalk and a peripheral stalk. During catalysis, ATP synthesis in the catalytic domain of F(1) is coupled via a rotary mechanism of the central stalk subunits to proton translocation. Component of the F(0) channel, it forms part of the peripheral stalk, linking F(1) to F(0). In Psychrobacter cryohalolentis (strain ATCC BAA-1226 / DSM 17306 / VKM B-2378 / K5), this protein is ATP synthase subunit b.